A 149-amino-acid chain; its full sequence is Transcriptional repressor NrdR (149 aa).

Residues 3 to 34 (CPFCGNRDTNVRDSRSVNEGTFIKRRRFCGEC) fold into a zinc finger. The ATP-cone domain occupies 49 to 139 (IKVIKKNGSC…VYMNFENEKD (91 aa)).

This sequence belongs to the NrdR family. Zn(2+) serves as cofactor.

In terms of biological role, negatively regulates transcription of bacterial ribonucleotide reductase nrd genes and operons by binding to NrdR-boxes. In Neorickettsia sennetsu (strain ATCC VR-367 / Miyayama) (Ehrlichia sennetsu), this protein is Transcriptional repressor NrdR.